We begin with the raw amino-acid sequence, 329 residues long: uncharacterized protein (329 aa).

This sequence to type I restriction system adenine methylases.

This is an uncharacterized protein from Bacillus subtilis (strain 168).